The following is a 484-amino-acid chain: uncharacterized protein (484 aa).

Transmembrane regions (helical) follow at residues 19–39 (LSFGVGITLWALIVFAYMIFV), 78–98 (VNWGITIGRGIGSVLVGWLIV), 111–131 (FFMLFGIIAPYSPTYAGFIIL), 134–154 (IFAIGGTMQIILIQPVVSNYL), 165–185 (FSPFFYPIGTIITLIPFAGII), 199–219 (IVFLVIGLLTLIPLIGYIILG), 249–269 (TWYWTILYGSWLVAVVFPFTF), 289–309 (ISVFLIFFLAGMFLGPFTIGL), 321–341 (ISTIITLGVFFYVLATVVFVL), 360–380 (LFLFLGLFMGICLWGIQGVML), 398–418 (FGLIWGLGYTAFTIATIITSL), and 440–460 (LGAYILIIIFSLVSSIGLALL).

The protein resides in the cell membrane. This is an uncharacterized protein from Mesomycoplasma hyopneumoniae (strain 232) (Mycoplasma hyopneumoniae).